Reading from the N-terminus, the 353-residue chain is Chemerin-like receptor 2 (353 aa).

The Extracellular segment spans residues 1 to 41 (MEVSKEMLFEELDNYSYALDYYSQESDPEEKVYLGLVHWIS). N14 is a glycosylation site (N-linked (GlcNAc...) asparagine). The helical transmembrane segment at 42–62 (LFLYALAFVLGIPGNAIVIWL) threads the bilayer. Residues 63-73 (MGFKWKKTVTT) lie on the Cytoplasmic side of the membrane. The chain crosses the membrane as a helical span at residues 74–94 (LWFLNLAIADFIFVLFLPLYI). Residues 95–112 (SYVALSFHWPFGLWLCKV) are Extracellular-facing. A disulfide bridge connects residues C110 and C187. A helical transmembrane segment spans residues 113–133 (NSFIAQLNMFSSVFFLTVISL). Residues 134–154 (DRYIHLLHPGLSHRHRTLKSS) are Cytoplasmic-facing. Residues 155–175 (LVVVILVWLLASLLGGPTLYF) form a helical membrane-spanning segment. Residues 176 to 210 (RDTMEVNNHIICYNNFQEHELTLMRHHVLTWVKFL) are Extracellular-facing. The chain crosses the membrane as a helical span at residues 211 to 231 (FGYLFPLLTMSSCYLCLIFKM). The Cytoplasmic portion of the chain corresponds to 232-247 (KKRNILISRKHLWMIL). Residues 248 to 268 (SVVIAFLVCWTPYHLFSIWEL) form a helical membrane-spanning segment. The Extracellular segment spans residues 269–286 (SIHHNSSFQNVLQGGIPL). A helical membrane pass occupies residues 287–307 (STGLAFLNSCLNPILYVLISK). Topologically, residues 308 to 353 (TFQARFRASVAEVLKRSLWEASCSGTVSEQLRSAETKSLSLLETAQ) are cytoplasmic.

The protein belongs to the chemokine-like receptor (CMKLR) family. As to expression, high expressed in white adipose tissue and skeletal muscle. Expressed in hippocampus and cortex.

It localises to the cell membrane. Receptor for chemoattractant adipokine chemerin/RARRES2 suggesting a role for this receptor in the regulation of inflammation and energy homesotasis. Signals mainly via beta-arrestin pathway. Binding of RARRES2 activates weakly G proteins, calcium mobilization and MAPK1/MAPK3 (ERK1/2) phosphorylation too. Acts also as a receptor for TAFA1, mediates its effects on neuronal stem-cell proliferation and differentiation via the activation of ROCK/ERK and ROCK/STAT3 signaling pathway. In Mus musculus (Mouse), this protein is Chemerin-like receptor 2 (Cmklr2).